Here is a 242-residue protein sequence, read N- to C-terminus: DNA repair protein RecO (242 aa).

It belongs to the RecO family. In terms of assembly, monomer.

Functionally, involved in DNA repair and RecF pathway recombination. In Salmonella schwarzengrund (strain CVM19633), this protein is DNA repair protein RecO.